Reading from the N-terminus, the 294-residue chain is Fructose-bisphosphate aldolase class 1 (294 aa).

The active-site Proton acceptor is the E176. K213 serves as the catalytic Schiff-base intermediate with dihydroxyacetone-P.

It belongs to the class I fructose-bisphosphate aldolase family.

It catalyses the reaction beta-D-fructose 1,6-bisphosphate = D-glyceraldehyde 3-phosphate + dihydroxyacetone phosphate. The protein operates within carbohydrate degradation; glycolysis; D-glyceraldehyde 3-phosphate and glycerone phosphate from D-glucose: step 4/4. The sequence is that of Fructose-bisphosphate aldolase class 1 from Oceanobacillus iheyensis (strain DSM 14371 / CIP 107618 / JCM 11309 / KCTC 3954 / HTE831).